The chain runs to 72 residues: MFIFFINTPTPPNIFFSKNIKIKKLMRFSCTEVCIFFSLIFFFFFFFFCVNWGCENNLLSRKYQMNRDTCNF.

Residues Val33 to Gly53 form a helical membrane-spanning segment.

It is found in the membrane. This is an uncharacterized protein from Dictyostelium discoideum (Social amoeba).